The following is a 485-amino-acid chain: Glutamate--tRNA ligase (485 aa).

The short motif at 11 to 21 is the 'HIGH' region element; that stretch reads PSPTGHLHIGN. Positions 252–256 match the 'KMSKS' region motif; it reads KLSKR. K255 is a binding site for ATP.

The protein belongs to the class-I aminoacyl-tRNA synthetase family. Glutamate--tRNA ligase type 1 subfamily. As to quaternary structure, monomer.

The protein resides in the cytoplasm. It catalyses the reaction tRNA(Glu) + L-glutamate + ATP = L-glutamyl-tRNA(Glu) + AMP + diphosphate. Catalyzes the attachment of glutamate to tRNA(Glu) in a two-step reaction: glutamate is first activated by ATP to form Glu-AMP and then transferred to the acceptor end of tRNA(Glu). The polypeptide is Glutamate--tRNA ligase (Bacillus licheniformis (strain ATCC 14580 / DSM 13 / JCM 2505 / CCUG 7422 / NBRC 12200 / NCIMB 9375 / NCTC 10341 / NRRL NRS-1264 / Gibson 46)).